We begin with the raw amino-acid sequence, 398 residues long: MACNFAVRVIYYPKEIHGVSVLNTNRSRKSRFSCRVMKLSTGVSAVAANPVRTSEERVYEVVLKQAALVREEKRSSRGLCLDTKRTGSKSFDKSENDDAGMKSWNLLNEAYDRCGEVCAEYAKTFYLGTLLMTPERRRAVWAIYVWCRRTDELVDGPNASHITPKALDRWEKRLNDLFDGQPYDMYDAALADTVSTYPVDIQPFKDMIDGMRMDLKKSRYQTFDELYLYCYYVAGTVGLMSVPVMGIAPESKATTESVYSAALALGIANQLTNILRDVGEDARRGRIYLPQEELKLAGITPEYIFKGKVTDKWRSFMKGQIKRARMFFDEAEKGVAELSSASRWPVWASLLLYKQILDAIEANDYDNFTKRAYVGKAKKLVSLPLAYSRALFAPSTVR.

Belongs to the phytoene/squalene synthase family. In terms of assembly, monomer.

It is found in the plastid. The protein localises to the chloroplast. The catalysed reaction is 2 (2E,6E,10E)-geranylgeranyl diphosphate = 15-cis-phytoene + 2 diphosphate. It participates in carotenoid biosynthesis; phytoene biosynthesis; all-trans-phytoene from geranylgeranyl diphosphate: step 1/1. Catalyzes the reaction from prephytoene diphosphate to phytoene. The polypeptide is Phytoene synthase, chloroplastic (PSY) (Daucus carota (Wild carrot)).